The chain runs to 275 residues: Mitochondrial fission factor homolog A (275 aa).

Topologically, residues 1–255 are cytoplasmic; it reads MAEVNRIHYE…ENKERAKREM (255 aa). The tract at residues 100–171 is disordered; sequence DFLEPEPAAN…PLISPEDSQN (72 aa). Positions 114–130 are enriched in basic and acidic residues; sequence PREEMKSHFRSRREQCR. Residues 131–142 show a composition bias toward polar residues; that stretch reads SENSTMRRNGQI. The stretch at 223-253 forms a coiled coil; sequence LTDAASLRRQIIKLNRRLQLLEHENKERAKR. Residues 256–273 traverse the membrane as a helical; Anchor for type IV membrane protein segment; it reads VMYSLTVAFWLVNSWIWL. Residues 274–275 lie on the Extracellular side of the membrane; it reads RR.

It belongs to the Tango11 family.

Its subcellular location is the mitochondrion outer membrane. The protein localises to the peroxisome. Plays a role in mitochondrial and peroxisomal fission. Promotes the recruitment and association of the fission mediator dynamin-related protein 1 (DNM1L) to the mitochondrial surface. In Danio rerio (Zebrafish), this protein is Mitochondrial fission factor homolog A.